Here is a 350-residue protein sequence, read N- to C-terminus: Decarboxylase iboD (350 aa).

Belongs to the phosphatidylserine decarboxylase family.

It participates in secondary metabolite biosynthesis. Functionally, decarboxylase; part of the gene cluster that mediates the biosynthesis of the psychoactive metabolites ibotenic acid and muscimol. The first committed step is glutamate hydroxylation by the 2-oxoglutarate-dependent dioxygenase iboH, and the last step is decarboxylation of ibotenic acid to muscimol by the decarboxylase iboD. The order of the intermediate reactions is somewhat ambiguous. IboA likely activates the carboxylic acid at position 5 to introduce an amide bond, and the flavin monooxygenase iboF generates the N-O bond. There are several options for the latter step. One option is that iboF directly hydroxylates the amide nitrogen formed by iboA to produce a hydroxamic acid species. Another option is that iboF hydroxylates an external N-containing compound, whose resulting N-O bond is subsequently introduced into the hydroxyglutamate scaffold. The paralogous PLP-dependent cystathionine gamma-synthase-like enzymes iboG1 and iboG2 are likely involved in substitution of the OH group at position 3 by the O-N moiety. The first cyclic intermediate is most probably tricholomic acid which is likely desaturated to ibotenic acid by the cytochrome P450 monooxygenase iboC. The polypeptide is Decarboxylase iboD (Amanita muscaria (strain Koide BX008)).